Here is a 38-residue protein sequence, read N- to C-terminus: Large ribosomal subunit protein bL36 (38 aa).

It belongs to the bacterial ribosomal protein bL36 family.

This chain is Large ribosomal subunit protein bL36, found in Synechococcus sp. (strain JA-2-3B'a(2-13)) (Cyanobacteria bacterium Yellowstone B-Prime).